A 750-amino-acid chain; its full sequence is MLRAKNQLFLLSPHYLRQVKESSGSRLIQQRLLHQQQPLHPEWAALAKKQLKGKNPEDLIWHTPEGISIKPLYSKRDTMDLPEELPGVKPFTRGPYPTMYTFRPWTIRQYAGFSTVEESNKFYKDNIKAGQQGLSVAFDLATHRGYDSDNPRVRGDVGMAGVAIDTVEDTKILFDGIPLEKMSVSMTMNGAVIPVLANFIVTGEEQGVPKEKLTGTIQNDILKEFMVRNTYIFPPEPSMKIIADIFEYTAKHMPKFNSISISGYHMQEAGADAILELAYTLADGLEYSRTGLQAGLTIDEFAPRLSFFWGIGMNFYMEIAKMRAGRRLWAHLIEKMFQPKNSKSLLLRAHCQTSGWSLTEQDPYNNIVRTAIEAMAAVFGGTQSLHTNSFDEALGLPTVKSARIARNTQIIIQEESGIPKVADPWGGSYMMECLTNDVYDAALKLINEIEEMGGMAKAVAEGIPKLRIEECAARRQARIDSGSEVIVGVNKYQLEKEDAVEVLAIDNTSVRNRQIEKLKKIKSSRDQALAERCLAALTECAASGDGNILALAVDASRARCTVGEITDALKKVFGEHKANDRMVSGAYRQEFGESKEITSAIKRVHKFMEREGRRPRLLVAKMGQDGHDRGAKVIATGFADLGFDVDIGPLFQTPREVAQQAVDADVHAVGISTLAAGHKTLVPELIKELNSLGRPDILVMCGGVIPPQDYEFLFEVGVSNVFGPGTRIPKAAVQVLDDIEKCLEKKQQSV.

Residues 1-32 constitute a mitochondrion transit peptide; the sequence is MLRAKNQLFLLSPHYLRQVKESSGSRLIQQRL. Q50 contacts malonyl-CoA. At K89 the chain carries N6-acetyllysine. Residues 96-99 and 106-110 each bind malonyl-CoA; these read YPTM and TIRQY. K212 is subject to N6-acetyllysine. Malonyl-CoA is bound by residues 216 to 218, R228, K255, H265, and 304 to 306; these read TIQ and RLS. An N6-acetyllysine modification is found at K335. K343 carries the post-translational modification N6-succinyllysine. S481 carries the phosphoserine modification. K595 carries the post-translational modification N6-succinyllysine. At K602 the chain carries N6-acetyllysine. Positions 614-746 constitute a B12-binding domain; the sequence is RPRLLVAKMG…DDIEKCLEKK (133 aa). H627 is an adenosylcob(III)alamin binding site.

Belongs to the methylmalonyl-CoA mutase family. In terms of assembly, homodimer. Interacts (the apoenzyme form) with MMAA; the interaction is GTP dependent. Adenosylcob(III)alamin is required as a cofactor.

The protein localises to the mitochondrion matrix. It is found in the mitochondrion. Its subcellular location is the cytoplasm. It catalyses the reaction (R)-methylmalonyl-CoA = succinyl-CoA. During catalysis, accumulation of oxidized inactive cofactor hydroxocobalamin (OH2Cbl) leads to loss of MMUT activity. Interaction with MMAA decreases the rate of OH2Cbl formation and promotes the replacement of OH2Cbl by the active cofactor adenosylcobalamin (AdoCbl), thereby restoring MMUT activity. Inhibited by itaconyl-CoA, a metabolite that inactivates the coenzyme B12 cofactor. Inhibited at high concentration of substrate. Functionally, catalyzes the reversible isomerization of methylmalonyl-CoA (MMCoA) (generated from branched-chain amino acid metabolism and degradation of dietary odd chain fatty acids and cholesterol) to succinyl-CoA (3-carboxypropionyl-CoA), a key intermediate of the tricarboxylic acid cycle. The protein is Methylmalonyl-CoA mutase, mitochondrial of Homo sapiens (Human).